The sequence spans 263 residues: Polyglutamine-binding protein 1 (263 aa).

The WW domain occupies 46–80; that stretch reads EGLPPSWYKVFDPSCGLPYYWNVDTDLVSWLSPHD. Ser94 carries the post-translational modification Phosphoserine. Positions 94–263 are disordered; sequence SSNADAEEKL…AEASRTKQQD (170 aa). Basic and acidic residues predominate over residues 99–173; that stretch reads AEEKLDRSHE…DKVDREESKE (75 aa). 14 consecutive repeat copies span residues 104-110, 111-117, 118-124, 125-131, 132-138, 139-140, 141-142, 143-144, 150-151, 152-153, 154-155, 156-157, 158-159, and 160-161. The tract at residues 104–138 is 5 X 7 AA approximate tandem repeats of D-R-[SG]-H-D-K-S; the sequence is DRSHEKSDRGHEKSDRGHEKSDRSHEKSERNHEKS. Positions 139–144 are 3 X 2 AA tandem repeats of [DE]-R; that stretch reads DRDRER. Residues 150-161 are 6 X 2 AA tandem repeats of [DE]-R; it reads DRERERDRDRDR. Residues 243 to 253 are important for interaction with TXNL4A; that stretch reads YPSPGAVLRAN. Ser245 bears the Phosphoserine mark.

As to quaternary structure, interacts with POU3F2/Brn-2, ATXN1, TXNL4A, HTT and AR. Interaction with ATXN1 correlates positively with the length of the polyglutamine tract. Interacts with RNA polymerase II large subunit in a phosphorylation-dependent manner. Forms a ternary complex with ATXN1 mutant and phosphorylated RNA polymerase II. Interacts (via C-terminus) with TXNL4A and CD2BP2. Interacts (via WW domain) with ATN1 and SF3B1, and may interact with additional splice factors. Interacts (via WW domain) with WBP11; Leading to reduce interaction between PQBP1 and TXNL4A. Interacts with CAPRIN1. Interacts with DDX1. Interacts with SFPQ. Interacts with KHSRP.

The protein localises to the nucleus. The protein resides in the nucleus speckle. It is found in the cytoplasmic granule. Intrinsically disordered protein that acts as a scaffold, and which is involved in different processes, such as pre-mRNA splicing, transcription regulation, innate immunity and neuron development. Interacts with splicing-related factors via the intrinsically disordered region and regulates alternative splicing of target pre-mRNA species. May suppress the ability of POU3F2 to transactivate the DRD1 gene in a POU3F2 dependent manner. Can activate transcription directly or via association with the transcription machinery. May be involved in ATXN1 mutant-induced cell death. The interaction with ATXN1 mutant reduces levels of phosphorylated RNA polymerase II large subunit. Involved in the assembly of cytoplasmic stress granule, possibly by participating in the transport of neuronal RNA granules. Also acts as an innate immune sensor of infection by retroviruses, by detecting the presence of reverse-transcribed DNA in the cytosol. Directly binds retroviral reverse-transcribed DNA in the cytosol and interacts with CGAS, leading to activate the cGAS-STING signaling pathway, triggering type-I interferon production. The sequence is that of Polyglutamine-binding protein 1 (PQBP1) from Bos taurus (Bovine).